A 232-amino-acid polypeptide reads, in one-letter code: Orotidine 5'-phosphate decarboxylase (232 aa).

Residues Asp-13, Lys-35, 62–71 (DLKFHDIPNT), Thr-121, Arg-182, Gln-191, Gly-211, and Arg-212 each bind substrate. Lys-64 acts as the Proton donor in catalysis.

The protein belongs to the OMP decarboxylase family. Type 1 subfamily. As to quaternary structure, homodimer.

The enzyme catalyses orotidine 5'-phosphate + H(+) = UMP + CO2. It participates in pyrimidine metabolism; UMP biosynthesis via de novo pathway; UMP from orotate: step 2/2. Its function is as follows. Catalyzes the decarboxylation of orotidine 5'-monophosphate (OMP) to uridine 5'-monophosphate (UMP). This Acinetobacter baumannii (strain ACICU) protein is Orotidine 5'-phosphate decarboxylase.